The sequence spans 170 residues: Cathelicidin antimicrobial peptide (170 aa).

The signal sequence occupies residues 1-30; that stretch reads MKTQRDGHSLGRWSLVLLLLGLVMPLAIVA. Positions 31–131 are cleaved as a propeptide — cathelin-like domain (CLD); that stretch reads QVLSYKEAVL…DISCDKDNKR (101 aa). 2 disulfides stabilise this stretch: cysteine 86–cysteine 97 and cysteine 108–cysteine 125. Residues 150–162 form an active core region; sequence FKRIVQRIKDFLR.

It belongs to the cathelicidin family. As to quaternary structure, monomer, homodimer or homotrimer (in vitro). Oligomerizes as tetra- or hexamer in solution (in vitro). Proteolytically cleaved by proteinase PRTN3 into antibacterial peptide LL-37. Proteolytically cleaved by cathepsin CTSG and neutrophil elastase ELANE. In terms of processing, resistant to proteolytic degradation in solution, and when bound to both zwitterionic (mimicking mammalian membranes) and negatively charged membranes (mimicking bacterial membranes). Post-translationally, after secretion onto the skin surface, the CAMP gene product is processed by a serine protease-dependent mechanism into multiple novel antimicrobial peptides distinct from and shorter than cathelicidin LL-37. These peptides show enhanced antimicrobial action, acquiring the ability to kill skin pathogens such as S.aureus, E.coli and C.albicans. These peptides have lost the ability to stimulate CXCL8/IL8 release from keratinocytes. The peptides act synergistically, killing bacteria at lower concentrations when present together, and maintain activity at increased salt condition.

Its subcellular location is the secreted. The protein resides in the vesicle. In terms of biological role, antimicrobial protein that is an integral component of the innate immune system. Binds to bacterial lipopolysaccharides (LPS). Acts via neutrophil N-formyl peptide receptors to enhance the release of CXCL2. Postsecretory processing generates multiple cathelicidin antimicrobial peptides with various lengths which act as a topical antimicrobial defense in sweat on skin. The unprocessed precursor form, cathelicidin antimicrobial peptide, inhibits the growth of Gram-negative E.coli and E.aerogenes with efficiencies comparable to that of the mature peptide LL-37 (in vitro). Antimicrobial peptide that is an integral component of the innate immune system. Binds to bacterial lipopolysaccharides (LPS). Causes membrane permeabilization by forming transmembrane pores (in vitro). Causes lysis of E.coli. Exhibits antimicrobial activity against Gram-negative bacteria such as P.aeruginosa, S.typhimurium, E.aerogenes, E.coli and P.syringae, Gram-positive bacteria such as L.monocytogenes, S.epidermidis, S.pyogenes and S.aureus, as well as vancomycin-resistant enterococci (in vitro). Exhibits antimicrobial activity against methicillin-resistant S.aureus, P.mirabilis, and C.albicans in low-salt media, but not in media containing 100 mM NaCl (in vitro). Forms chiral supramolecular assemblies with quinolone signal (PQS) molecules of P.aeruginosa, which may lead to interference of bacterial quorum signaling and perturbance of bacterial biofilm formation. May form supramolecular fiber-like assemblies on bacterial membranes. Induces cytokine and chemokine producation as well as TNF/TNFA and CSF2/GMCSF production in normal human keratinocytes. Exhibits hemolytic activity against red blood cells. Functionally, exhibits antimicrobial activity against E.coli and B.megaterium (in vitro). This Pan troglodytes (Chimpanzee) protein is Cathelicidin antimicrobial peptide.